The following is a 318-amino-acid chain: Death effector domain-containing protein (318 aa).

A DED domain is found at 25 to 103 (SLHRMFDIVG…RHDLLPYVTL (79 aa)). The disordered stretch occupies residues 128–191 (PRALSDPEPR…SVTPDPKEKQ (64 aa)).

As to quaternary structure, interacts with CASP8, CASP10, KRT8, KRT18, CASP3 and FADD. Homodimerizes and heterodimerizes with DEDD2. In terms of processing, exists predominantly in a mono- or diubiquitinated form. In terms of tissue distribution, ubiquitously expressed.

The protein resides in the cytoplasm. It is found in the nucleus. Its subcellular location is the nucleolus. A scaffold protein that directs CASP3 to certain substrates and facilitates their ordered degradation during apoptosis. May also play a role in mediating CASP3 cleavage of KRT18. Regulates degradation of intermediate filaments during apoptosis. May play a role in the general transcription machinery in the nucleus and might be an important regulator of the activity of GTF3C3. Inhibits DNA transcription in vitro. The protein is Death effector domain-containing protein (Dedd) of Mus musculus (Mouse).